Consider the following 134-residue polypeptide: Probable histone H2A.3 (134 aa).

This sequence belongs to the histone H2A family. As to quaternary structure, the nucleosome is a histone octamer containing two molecules each of H2A, H2B, H3 and H4 assembled in one H3-H4 heterotetramer and two H2A-H2B heterodimers. The octamer wraps approximately 147 bp of DNA.

Its subcellular location is the nucleus. It is found in the chromosome. Its function is as follows. Core component of nucleosome. Nucleosomes wrap and compact DNA into chromatin, limiting DNA accessibility to the cellular machineries which require DNA as a template. Histones thereby play a central role in transcription regulation, DNA repair, DNA replication and chromosomal stability. DNA accessibility is regulated via a complex set of post-translational modifications of histones, also called histone code, and nucleosome remodeling. The chain is Probable histone H2A.3 from Oryza sativa subsp. indica (Rice).